The sequence spans 1444 residues: DNA polymerase III PolC-type (1444 aa).

The Exonuclease domain occupies 421–577 (YVVFDVETTG…ADAEATGYLL (157 aa)).

It belongs to the DNA polymerase type-C family. PolC subfamily.

It is found in the cytoplasm. The enzyme catalyses DNA(n) + a 2'-deoxyribonucleoside 5'-triphosphate = DNA(n+1) + diphosphate. Its function is as follows. Required for replicative DNA synthesis. This DNA polymerase also exhibits 3' to 5' exonuclease activity. This is DNA polymerase III PolC-type from Lacticaseibacillus paracasei (strain ATCC 334 / BCRC 17002 / CCUG 31169 / CIP 107868 / KCTC 3260 / NRRL B-441) (Lactobacillus paracasei).